A 428-amino-acid chain; its full sequence is Cell number regulator 13 (428 aa).

A compositionally biased stretch (basic and acidic residues) spans 233–280; it reads PEKETNVKAPEKKGSNYSESKGETAKSFDDDDDYPKKQNGDYPKKQKD. The tract at residues 233 to 290 is disordered; the sequence is PEKETNVKAPEKKGSNYSESKGETAKSFDDDDDYPKKQNGDYPKKQKDTCSTQRCSSQ. A compositionally biased stretch (polar residues) spans 281 to 290; it reads TCSTQRCSSQ. Residues 354 to 370 form a helical membrane-spanning segment; that stretch reads IMAYSLILSCCCYTCCV.

Expressed in roots, coleoptiles, leaves, stalks, apical meristems, immature ears, embryos, endosperm, pericarp, silks and tassel spikelets. Not detected in pollen.

The protein resides in the membrane. The polypeptide is Cell number regulator 13 (CNR13) (Zea mays (Maize)).